The following is a 113-amino-acid chain: Large ribosomal subunit protein uL22 (113 aa).

It belongs to the universal ribosomal protein uL22 family. In terms of assembly, part of the 50S ribosomal subunit.

Its function is as follows. This protein binds specifically to 23S rRNA; its binding is stimulated by other ribosomal proteins, e.g. L4, L17, and L20. It is important during the early stages of 50S assembly. It makes multiple contacts with different domains of the 23S rRNA in the assembled 50S subunit and ribosome. The globular domain of the protein is located near the polypeptide exit tunnel on the outside of the subunit, while an extended beta-hairpin is found that lines the wall of the exit tunnel in the center of the 70S ribosome. This chain is Large ribosomal subunit protein uL22, found in Mycoplasmopsis synoviae (strain 53) (Mycoplasma synoviae).